The chain runs to 451 residues: tRNA-2-methylthio-N(6)-dimethylallyladenosine synthase (451 aa).

The MTTase N-terminal domain occupies Q2 to A119. [4Fe-4S] cluster is bound by residues C11, C48, C82, C157, C161, and C164. One can recognise a Radical SAM core domain in the interval G143–A377. Positions Q378–L441 constitute a TRAM domain.

This sequence belongs to the methylthiotransferase family. MiaB subfamily. As to quaternary structure, monomer. Requires [4Fe-4S] cluster as cofactor.

It is found in the cytoplasm. The enzyme catalyses N(6)-dimethylallyladenosine(37) in tRNA + (sulfur carrier)-SH + AH2 + 2 S-adenosyl-L-methionine = 2-methylsulfanyl-N(6)-dimethylallyladenosine(37) in tRNA + (sulfur carrier)-H + 5'-deoxyadenosine + L-methionine + A + S-adenosyl-L-homocysteine + 2 H(+). Catalyzes the methylthiolation of N6-(dimethylallyl)adenosine (i(6)A), leading to the formation of 2-methylthio-N6-(dimethylallyl)adenosine (ms(2)i(6)A) at position 37 in tRNAs that read codons beginning with uridine. This is tRNA-2-methylthio-N(6)-dimethylallyladenosine synthase from Acidithiobacillus ferrooxidans (strain ATCC 23270 / DSM 14882 / CIP 104768 / NCIMB 8455) (Ferrobacillus ferrooxidans (strain ATCC 23270)).